The sequence spans 51 residues: Toxin CSTX-18 (51 aa).

4 disulfides stabilise this stretch: cysteine 9–cysteine 22, cysteine 14–cysteine 27, cysteine 21–cysteine 36, and cysteine 29–cysteine 34.

Contains 4 disulfide bonds. As to expression, expressed by the venom gland.

Its subcellular location is the secreted. This chain is Toxin CSTX-18, found in Cupiennius salei (American wandering spider).